Here is a 752-residue protein sequence, read N- to C-terminus: Catalase-peroxidase (752 aa).

A disordered region spans residues 1-20 (MENELVSKVKAPVPGNQTNT). The tryptophyl-tyrosyl-methioninium (Trp-Tyr) (with M-260) cross-link spans 111–234 (WHSAGTYRIG…LGAVQMGLIY (124 aa)). Residue His-112 is the Proton acceptor of the active site. Residues 234–260 (YVNPEGPNGKPDPAAAAVDIRETFARM) constitute a cross-link (tryptophyl-tyrosyl-methioninium (Tyr-Met) (with W-111)). Residue His-275 participates in heme b binding.

The protein belongs to the peroxidase family. Peroxidase/catalase subfamily. In terms of assembly, homodimer or homotetramer. The cofactor is heme b. In terms of processing, formation of the three residue Trp-Tyr-Met cross-link is important for the catalase, but not the peroxidase activity of the enzyme.

It catalyses the reaction H2O2 + AH2 = A + 2 H2O. The enzyme catalyses 2 H2O2 = O2 + 2 H2O. Bifunctional enzyme with both catalase and broad-spectrum peroxidase activity. The sequence is that of Catalase-peroxidase from Koribacter versatilis (strain Ellin345).